Consider the following 333-residue polypeptide: MSINVTEIVLHQLQQTAGETAELHTVLREDLLAISPEVEQMMLQLHQAYQNKAKAYGIFQSESIFAQQLNRLLEGESEFLPFSHSCAKMLATELVKYPFASGGTFILCRYTFLATEYLFIALIDSRASMLVDDKLEVKRTEYLDITQYDIACRINLTELKHNAQSNRYLTFIKGRVGRKVADFFMDFLGAEEGLNPQVQNQTLLQAVSDYCEQGELDSNQTQAVKKQVFEYCKGQINSGEEIAISELSASMPTLKEIDFADFAEQQEYGLEESIPPVRNALKTLTKYSGSGKGVTISFDAELLSQRIIWDELNDTLTIKGLPANLRDQLERNK.

It belongs to the YejK family.

The protein localises to the cytoplasm. It localises to the nucleoid. In Glaesserella parasuis serovar 5 (strain SH0165) (Haemophilus parasuis), this protein is Nucleoid-associated protein HAPS_0704.